Reading from the N-terminus, the 838-residue chain is DNA gyrase subunit A (838 aa).

One can recognise a Topo IIA-type catalytic domain in the interval 41–510 (LPEVRDGLKP…ADGDVSDEDL (470 aa)). Tyr129 serves as the catalytic O-(5'-phospho-DNA)-tyrosine intermediate. Positions 537–543 (QKRGGKG) match the GyrA-box motif.

This sequence belongs to the type II topoisomerase GyrA/ParC subunit family. As to quaternary structure, heterotetramer, composed of two GyrA and two GyrB chains. In the heterotetramer, GyrA contains the active site tyrosine that forms a transient covalent intermediate with DNA, while GyrB binds cofactors and catalyzes ATP hydrolysis. It depends on Mg(2+) as a cofactor.

It is found in the cytoplasm. It carries out the reaction ATP-dependent breakage, passage and rejoining of double-stranded DNA.. DNA supercoiling is inhibited by EDTA, novobiocin, coumermycin and ciprofloxacin. In terms of biological role, a type II topoisomerase that negatively supercoils closed circular double-stranded (ds) DNA in an ATP-dependent manner to modulate DNA topology and maintain chromosomes in an underwound state. Also catalyzes the interconversion of other topological isomers of double-stranded DNA rings, including catenanes and knotted rings. Relaxes negatively supercoiled DNA in an ATP-independent manner. A linear reaction intermediate can be trapped in the presence of the antibiotic ciprofloxacin. Negative supercoiling favors strand separation, and DNA replication, transcription, recombination and repair, all of which involve strand separation. Type II topoisomerases break and join 2 DNA strands simultaneously in an ATP-dependent manner. The chain is DNA gyrase subunit A from Mycobacterium bovis (strain BCG / Pasteur 1173P2).